We begin with the raw amino-acid sequence, 507 residues long: MGVIQGPVRVRFAPSPTGYLHIGGVRTALFNWLFARHYGGQFILRIEDTDEKRYVPGSADDLMASLRWVGIEWDEGPDIGGPHAPYVQSLRYEAGIYRPFVEQLLESGHAYLSFTTEEELERMRAEAQARGVKAFRFRGPERDWPLDRQREMAATGRPYTVRLKTPTEGVTAFRDLVRGGERIEFKNEELYDIVLVKSSGMPVYHLAHLVDDHLMRMTHVLRSDEWVASTPYHVLLYQAFGWDPPAFAHLPPILRQDGRGKLSKRTDDVAANRFWERGYLPDAMFNYLALQGWSYDGYTEIMSREELIERFTLDRVQPSPARWNPEKLLDMNGIYIRRLTTEQLVDAMAPFLARAGLIGNPPTPDERAYLLQLAPLIHERLKELGEAPELLEFFFRDVTDYDPQALIPKKMDASTTVAALQAARDRLASLEPWTHDRLEAELRALGEELGLKPGQLFGALRVAATGRTVAPPLFDTLAALGKPRTLRRLEAAISVLAAAHAEVKGQS.

The 'HIGH' region signature appears at 14–24 (PSPTGYLHIGG). The 'KMSKS' region motif lies at 261-265 (KLSKR). Lys264 is a binding site for ATP.

This sequence belongs to the class-I aminoacyl-tRNA synthetase family. Glutamate--tRNA ligase type 1 subfamily. Monomer.

It localises to the cytoplasm. The catalysed reaction is tRNA(Glu) + L-glutamate + ATP = L-glutamyl-tRNA(Glu) + AMP + diphosphate. Catalyzes the attachment of glutamate to tRNA(Glu) in a two-step reaction: glutamate is first activated by ATP to form Glu-AMP and then transferred to the acceptor end of tRNA(Glu). This is Glutamate--tRNA ligase from Roseiflexus castenholzii (strain DSM 13941 / HLO8).